Reading from the N-terminus, the 200-residue chain is Ciliary microtubule inner protein 2C (200 aa).

Belongs to the CIMIP2 family. Microtubule inner protein component of sperm flagellar doublet microtubules.

Its subcellular location is the cytoplasm. It localises to the cytoskeleton. The protein resides in the cilium axoneme. The protein localises to the flagellum axoneme. Functionally, microtubule inner protein (MIP) part of the dynein-decorated doublet microtubules (DMTs) in cilia axoneme, which is required for motile cilia beating. Binds to the intra-tubulin interfaces. This Mus musculus (Mouse) protein is Ciliary microtubule inner protein 2C (Cimip2c).